A 171-amino-acid chain; its full sequence is S-ribosylhomocysteine lyase (171 aa).

Positions 54, 58, and 128 each coordinate Fe cation.

The protein belongs to the LuxS family. In terms of assembly, homodimer. Fe cation serves as cofactor.

It carries out the reaction S-(5-deoxy-D-ribos-5-yl)-L-homocysteine = (S)-4,5-dihydroxypentane-2,3-dione + L-homocysteine. Involved in the synthesis of autoinducer 2 (AI-2) which is secreted by bacteria and is used to communicate both the cell density and the metabolic potential of the environment. The regulation of gene expression in response to changes in cell density is called quorum sensing. Catalyzes the transformation of S-ribosylhomocysteine (RHC) to homocysteine (HC) and 4,5-dihydroxy-2,3-pentadione (DPD). The polypeptide is S-ribosylhomocysteine lyase (Cronobacter sakazakii (strain ATCC BAA-894) (Enterobacter sakazakii)).